Here is a 145-residue protein sequence, read N- to C-terminus: Basic phospholipase A2 cPt09 (145 aa).

The signal sequence occupies residues 1–21 (MYPAHLLVLLAVCVSLLGAST). Positions 22-27 (IPPLPL) are excised as a propeptide. Cystine bridges form between Cys38–Cys98, Cys54–Cys144, Cys56–Cys72, Cys71–Cys125, Cys78–Cys118, Cys87–Cys111, and Cys105–Cys116. 3 residues coordinate Ca(2+): Tyr55, Gly57, and Gly59. His75 is a catalytic residue. Asp76 lines the Ca(2+) pocket. Asp119 is a catalytic residue.

The protein belongs to the phospholipase A2 family. Group I subfamily. D49 sub-subfamily. It depends on Ca(2+) as a cofactor. As to expression, expressed by the venom gland.

The protein resides in the secreted. The enzyme catalyses a 1,2-diacyl-sn-glycero-3-phosphocholine + H2O = a 1-acyl-sn-glycero-3-phosphocholine + a fatty acid + H(+). Its function is as follows. PLA2 catalyzes the calcium-dependent hydrolysis of the 2-acyl groups in 3-sn-phosphoglycerides. This chain is Basic phospholipase A2 cPt09, found in Laticauda semifasciata (Black-banded sea krait).